We begin with the raw amino-acid sequence, 304 residues long: Vacuolar protein sorting-associated protein 26C (304 aa).

This sequence belongs to the VPS26 family. Component of the commander complex that is essential for endosomal recycling of transmembrane cargos; the commander complex is composed of the CCC subcomplex and the retriever subcomplex. Component of the heterotrimeric retriever complex consisting of vps26c, vps29 and vps35l; within the complex interacts with vps35l. Interacts with snx17 (via C-terminus); the interaction is direct and associates snx17 with the retriever complex. Interacts with snx31; the interaction is direct.

The protein localises to the endosome. Component of the commander complex that is essential for endosomal recycling of transmembrane cargos; the commander complex is composed of the CCC subcomplex and the retriever subcomplex. Component of the retriever complex, which is a heterotrimeric complex related to retromer cargo-selective complex (CSC) and essential for retromer-independent retrieval and recycling of numerous cargos such as integrin alpha-5/beta-1 (ITGA5:ITGB1). The recruitment of the retriever complex to the endosomal membrane involves CCC and WASH complexes. In the endosomes, drives the retriever and recycling of NxxY-motif-containing cargo proteins by coupling to snx17, a cargo essential for the homeostatic maintenance of numerous cell surface proteins associated with processes that include cell migration, cell adhesion, nutrient supply and cell signaling. The chain is Vacuolar protein sorting-associated protein 26C (vps26c) from Dictyostelium discoideum (Social amoeba).